The following is a 351-amino-acid chain: Protein MSS2, mitochondrial (351 aa).

TPR repeat units follow at residues 155–188 (HLTVKLIGDLFFENKTYDKAEKYYQEFLKLENST) and 260–294 (KECFKTLGFLELNYFNNYERAKEWFKTGMEIMDLE).

Interacts with COX18.

Its subcellular location is the mitochondrion inner membrane. Its function is as follows. Required to stabilize mitochondrial cytochrome C oxidase subunit 2 (COX2) and to translocate the C-terminal domain of COX2 through the inner membrane. This chain is Protein MSS2, mitochondrial (MSS2), found in Saccharomyces cerevisiae (strain ATCC 204508 / S288c) (Baker's yeast).